The primary structure comprises 210 residues: Protein RCR2 (210 aa).

Residues 41–61 (WIFFIFFIVALLILLFSTAKV) traverse the membrane as a helical segment. Positions 125-149 (PNGKTEYLAPPPLSEEQASSTDKDL) are disordered. Ser161 is modified (phosphoserine). The segment covering 175–199 (NNFVNGQSNRNEQHSPTVESSSFDV) has biased composition (polar residues). Residues 175 to 210 (NNFVNGQSNRNEQHSPTVESSSFDVNNAPARAKVSK) form a disordered region. A Phosphothreonine modification is found at Thr191.

This sequence to yeast YBR005W.

It is found in the membrane. The chain is Protein RCR2 (RCR2) from Saccharomyces cerevisiae (strain ATCC 204508 / S288c) (Baker's yeast).